A 308-amino-acid chain; its full sequence is Ribonuclease HIII (308 aa).

In terms of domain architecture, RNase H type-2 spans 92 to 308 (DNHIGSDEAG…ANTQKAQKLL (217 aa)). 3 residues coordinate a divalent metal cation: D98, E99, and D204.

Belongs to the RNase HII family. RnhC subfamily. The cofactor is Mn(2+). Requires Mg(2+) as cofactor.

It is found in the cytoplasm. The catalysed reaction is Endonucleolytic cleavage to 5'-phosphomonoester.. In terms of biological role, endonuclease that specifically degrades the RNA of RNA-DNA hybrids. This Oceanobacillus iheyensis (strain DSM 14371 / CIP 107618 / JCM 11309 / KCTC 3954 / HTE831) protein is Ribonuclease HIII.